The chain runs to 531 residues: MLCTGSNASTIIQEQKHQQDSASADHRSTLLGLETELKKDSRSLLFSCCCLALAWAAALPRASAAARSALTLASAFTLSLASTAAFSVFSLASAYAPALLCFCETFGSLKGYEVENHMNASVTMLEEAIMYSSFSSKKRIRHSSSLTNDLIEEILSRLHSKSVARFRCVSKQCASMFASPYFKKLFQTRSSAKPSLLFAIADYGIEEDYSMKFFSSPQLENTYEKTSSTLVAAAEFHVKFSPDKSIPIYLSEDPRYVSIGYASGLIYNYCGRYVGRPLICNPNTGRYAILPYRYTYRKAYSFFGFDPIDKQYKALSLPYVDGPGRSKVLTFGAGDLTWRNIKSHTEDISYRYYEYVIVCFDVTSEKFTFVGVQKFCLLINYKGKLDVIYWEDDVDIHEICYFAKDLDEYLDENLDADATNELHVWVLEDVEKQEWSKYAYTWTDDTFFHRHLSIAGATASGEIVFSMRKYTSKQPFYVFYFNPERNTLQRVEIQGFGEAFRTTCSVRTFVNHIEDLDVNDLEQLNYIGTRR.

One can recognise an F-box domain in the interval 141 to 188; sequence RHSSSLTNDLIEEILSRLHSKSVARFRCVSKQCASMFASPYFKKLFQT.

The protein is Putative F-box protein At2g02890 of Arabidopsis thaliana (Mouse-ear cress).